The sequence spans 207 residues: ATP-dependent Clp protease proteolytic subunit (207 aa).

Catalysis depends on Ser111, which acts as the Nucleophile. The active site involves His136.

Belongs to the peptidase S14 family. As to quaternary structure, fourteen ClpP subunits assemble into 2 heptameric rings which stack back to back to give a disk-like structure with a central cavity, resembling the structure of eukaryotic proteasomes.

It is found in the cytoplasm. It carries out the reaction Hydrolysis of proteins to small peptides in the presence of ATP and magnesium. alpha-casein is the usual test substrate. In the absence of ATP, only oligopeptides shorter than five residues are hydrolyzed (such as succinyl-Leu-Tyr-|-NHMec, and Leu-Tyr-Leu-|-Tyr-Trp, in which cleavage of the -Tyr-|-Leu- and -Tyr-|-Trp bonds also occurs).. In terms of biological role, cleaves peptides in various proteins in a process that requires ATP hydrolysis. Has a chymotrypsin-like activity. Plays a major role in the degradation of misfolded proteins. The sequence is that of ATP-dependent Clp protease proteolytic subunit from Aeromonas salmonicida (strain A449).